Consider the following 166-residue polypeptide: Small ribosomal subunit protein uS5 (166 aa).

An S5 DRBM domain is found at 11 to 74 (LQEKLIAVNR…EKARRNMINV (64 aa)).

It belongs to the universal ribosomal protein uS5 family. As to quaternary structure, part of the 30S ribosomal subunit. Contacts proteins S4 and S8.

In terms of biological role, with S4 and S12 plays an important role in translational accuracy. Its function is as follows. Located at the back of the 30S subunit body where it stabilizes the conformation of the head with respect to the body. The protein is Small ribosomal subunit protein uS5 of Haemophilus influenzae (strain 86-028NP).